A 123-amino-acid chain; its full sequence is Fluoride-specific ion channel FluC (123 aa).

4 consecutive transmembrane segments (helical) span residues 5–25 (LIIG…SGII), 29–49 (FGIP…VGFV), 65–85 (LIIT…YETF), and 94–114 (IKFL…IYVG). 2 residues coordinate Na(+): Gly72 and Thr75.

Belongs to the fluoride channel Fluc/FEX (TC 1.A.43) family.

Its subcellular location is the cell membrane. The catalysed reaction is fluoride(in) = fluoride(out). Its activity is regulated as follows. Na(+) is not transported, but it plays an essential structural role and its presence is essential for fluoride channel function. Fluoride-specific ion channel. Important for reducing fluoride concentration in the cell, thus reducing its toxicity. This chain is Fluoride-specific ion channel FluC, found in Methanococcus aeolicus (strain ATCC BAA-1280 / DSM 17508 / OCM 812 / Nankai-3).